The chain runs to 201 residues: Cold shock domain-containing protein 4 (201 aa).

The residue at position 2 (Ser-2) is an N-acetylserine. One can recognise a CSD domain in the interval 14–81 (RRKGTVKWFD…RPKAIEVSGP (68 aa)). The tract at residues 66 to 109 (EVDNSGRPKAIEVSGPDGAPVQGNSGGGGSSGGRGGFGGGGGRG) is disordered. A compositionally biased stretch (gly residues) spans 89–109 (NSGGGGSSGGRGGFGGGGGRG). CCHC-type zinc fingers lie at residues 136–153 (NSCFKCGEPGHMARECSQ) and 180–197 (LSCYSCGESGHFARDCTS).

This sequence belongs to the cold shock protein (CSP) family. Mostly expressed in shoot apices and siliques, and, to a lower extent, in roots, cotyledons, stems, shoots, leaves, floral buds and flowers. Present in shoot apical meristems and siliques (at protein level). Very low levels are observed in cv. Landsberg erecta compared to cv. Columbia.

The protein resides in the cytoplasm. The protein localises to the nucleus. Its subcellular location is the nucleolus. In terms of biological role, chaperone that binds to and unwinds RNA and both single-stranded DNA and double-stranded DNA (ssDNA and dsDNA DNA). Regulates the flowering transition and flower and seed development, particularly at late stages of embryo development, through regulation of gene expression (including MEA, FIS2, AP1, CAL, AG and SHP2). The protein is Cold shock domain-containing protein 4 (CSP4) of Arabidopsis thaliana (Mouse-ear cress).